Consider the following 147-residue polypeptide: Prefoldin subunit alpha (147 aa).

This sequence belongs to the prefoldin alpha subunit family. As to quaternary structure, heterohexamer of two alpha and four beta subunits.

The protein localises to the cytoplasm. Functionally, molecular chaperone capable of stabilizing a range of proteins. Seems to fulfill an ATP-independent, HSP70-like function in archaeal de novo protein folding. The polypeptide is Prefoldin subunit alpha (Saccharolobus islandicus (strain M.16.27) (Sulfolobus islandicus)).